Here is a 355-residue protein sequence, read N- to C-terminus: Protein RecA (355 aa).

Residue 66 to 73 coordinates ATP; sequence GPESSGKT. The tract at residues 331-355 is disordered; it reads DVPEEDLPTTEDEQINILPDDSTEE. A compositionally biased stretch (acidic residues) spans 332–344; sequence VPEEDLPTTEDEQ.

The protein belongs to the RecA family.

The protein resides in the cytoplasm. Its function is as follows. Can catalyze the hydrolysis of ATP in the presence of single-stranded DNA, the ATP-dependent uptake of single-stranded DNA by duplex DNA, and the ATP-dependent hybridization of homologous single-stranded DNAs. It interacts with LexA causing its activation and leading to its autocatalytic cleavage. This Latilactobacillus sakei subsp. sakei (strain 23K) (Lactobacillus sakei subsp. sakei) protein is Protein RecA.